We begin with the raw amino-acid sequence, 155 residues long: Ribosomal RNA large subunit methyltransferase H (155 aa).

S-adenosyl-L-methionine-binding positions include Leu72, Gly103, and 122–127 (FGRMVW).

This sequence belongs to the RNA methyltransferase RlmH family. Homodimer.

Its subcellular location is the cytoplasm. The catalysed reaction is pseudouridine(1915) in 23S rRNA + S-adenosyl-L-methionine = N(3)-methylpseudouridine(1915) in 23S rRNA + S-adenosyl-L-homocysteine + H(+). In terms of biological role, specifically methylates the pseudouridine at position 1915 (m3Psi1915) in 23S rRNA. This Paracoccus denitrificans (strain Pd 1222) protein is Ribosomal RNA large subunit methyltransferase H.